The following is a 156-amino-acid chain: MKIQLVAVGTRMPDWVTTGFKEYQRRFPRDMALELVEIPAGKRGKNADIARILHKEGEQMLAAIPKGNHIVSLDLPGKTWTTPQLATQLSRWQLDGRDVSLLIGGPEGLAPSCKQAASQSWCLSALTLPHPLVRVVVAESLYRAWSVNTNHPYHRE.

S-adenosyl-L-methionine is bound by residues leucine 73, glycine 104, and 123–128 (LSALTL).

The protein belongs to the RNA methyltransferase RlmH family. Homodimer.

It localises to the cytoplasm. It carries out the reaction pseudouridine(1915) in 23S rRNA + S-adenosyl-L-methionine = N(3)-methylpseudouridine(1915) in 23S rRNA + S-adenosyl-L-homocysteine + H(+). In terms of biological role, specifically methylates the pseudouridine at position 1915 (m3Psi1915) in 23S rRNA. The polypeptide is Ribosomal RNA large subunit methyltransferase H (Shewanella woodyi (strain ATCC 51908 / MS32)).